The primary structure comprises 902 residues: Glutamate receptor 4 (902 aa).

A signal peptide spans 1–20; the sequence is MRIISRQIVLLFSGFWGLAM. Residues 22–544 lie on the Extracellular side of the membrane; it reads AFPSSVQIGG…GVFSFLDPLA (523 aa). 6 N-linked (GlcNAc...) asparagine glycosylation sites follow: asparagine 52, asparagine 56, asparagine 258, asparagine 371, asparagine 407, and asparagine 414. The cysteines at positions 84 and 331 are disulfide-linked. Residues proline 500, threonine 502, and arginine 507 each coordinate L-glutamate. Residues 545–565 form a helical membrane-spanning segment; that stretch reads YEIWMCIVFAYIGVSVVLFLV. The Cytoplasmic portion of the chain corresponds to 566–592; sequence SRFSPYEWHTEEPEDGKEGPSDQPPNE. An intramembrane region (helical; Pore-forming) is located at residues 593-608; sequence FGIFNSLWFSLGAFMQ. The stretch at 609–611 is an intramembrane region; it reads QGC. Cysteine 611 carries the S-palmitoyl cysteine lipid modification. The Cytoplasmic portion of the chain corresponds to 612–617; sequence DISPRS. A helical membrane pass occupies residues 618-638; that stretch reads LSGRIVGGVWWFFTLIIISSY. Topologically, residues 639-813 are extracellular; sequence TANLAAFLTV…DKTSALSLSN (175 aa). Serine 676, threonine 677, and glutamate 727 together coordinate L-glutamate. A disulfide bond links cysteine 740 and cysteine 795. The helical transmembrane segment at 814-834 threads the bilayer; that stretch reads VAGVFYILVGGLGLAMLVALI. Residues 835 to 902 lie on the Cytoplasmic side of the membrane; that stretch reads EFCYKSRAEA…GLAVIASDLP (68 aa). Cysteine 837 carries the S-palmitoyl cysteine lipid modification. A Phosphoserine; by PKC/PRKCG modification is found at serine 862.

The protein belongs to the glutamate-gated ion channel (TC 1.A.10.1) family. GRIA4 subfamily. Homotetramer or heterotetramer of pore-forming glutamate receptor subunits. Tetramers may be formed by the dimerization of dimers. Interacts with EPB41L1 via its C-terminus. Isoform 3 interacts with PICK1. Found in a complex with GRIA1, GRIA2, GRIA3, CNIH2, CNIH3, CACNG2, CACNG3, CACNG4, CACNG5, CACNG7 and CACNG8. Interacts with CACNG5 and PRKCG. Found in a complex with GRIA1, GRIA2, GRIA3, DLG4, CACNG8 and CNIH2. In terms of processing, palmitoylated. Depalmitoylated upon L-glutamate stimulation. ZDHHC3/GODZ specifically palmitoylates Cys-611, which leads to Golgi retention and decreased cell surface expression. In contrast, Cys-837 palmitoylation does not affect cell surface expression but regulates stimulation-dependent endocytosis. Phosphorylated at Ser-862 by PRKCG; phosphorylation increases plasma membrane-associated GRI4 expression.

Its subcellular location is the cell membrane. It localises to the postsynaptic cell membrane. It is found in the cell projection. The protein resides in the dendrite. It carries out the reaction Ca(2+)(in) = Ca(2+)(out). The enzyme catalyses Na(+)(in) = Na(+)(out). The catalysed reaction is Mg(2+)(in) = Mg(2+)(out). Its function is as follows. Ionotropic glutamate receptor that functions as a ligand-gated cation channel, gated by L-glutamate and glutamatergic agonists such as alpha-amino-3-hydroxy-5-methyl-4-isoxazolepropionic acid (AMPA), quisqualic acid, and kainic acid. L-glutamate acts as an excitatory neurotransmitter at many synapses in the central nervous system and plays an important role in fast excitatory synaptic transmission. Binding of the excitatory neurotransmitter L-glutamate induces a conformation change, leading to the opening of the cation channel, and thereby converts the chemical signal to an electrical impulse upon entry of monovalent and divalent cations such as sodium and calcium. The receptor then desensitizes rapidly and enters a transient inactive state, characterized by the presence of bound agonist. In the presence of CACNG8, shows resensitization which is characterized by a delayed accumulation of current flux upon continued application of L-glutamate. The protein is Glutamate receptor 4 of Macaca fascicularis (Crab-eating macaque).